We begin with the raw amino-acid sequence, 99 residues long: Small ribosomal subunit protein bS18 (99 aa).

It belongs to the bacterial ribosomal protein bS18 family. Part of the 30S ribosomal subunit. Forms a tight heterodimer with protein bS6.

Its function is as follows. Binds as a heterodimer with protein bS6 to the central domain of the 16S rRNA, where it helps stabilize the platform of the 30S subunit. This chain is Small ribosomal subunit protein bS18, found in Christiangramia forsetii (strain DSM 17595 / CGMCC 1.15422 / KT0803) (Gramella forsetii).